The following is a 471-amino-acid chain: Methyltransferase OMS1, mitochondrial (471 aa).

The N-terminal 39 residues, 1–39, are a transit peptide targeting the mitochondrion; that stretch reads MIVFRRFPTCLLHHIRQPASRSLLLESQRRSLSFTSYKY. The Mitochondrial matrix portion of the chain corresponds to 40–103; it reads NSSHIDDDKS…AIARSEKFSK (64 aa). Residues 104 to 123 form a helical membrane-spanning segment; the sequence is GMTKYMIGAYVIFLIYGLFF. Residues 124–471 lie on the Mitochondrial intermembrane side of the membrane; sequence TKKLFAKDKE…LEPVPPVSKS (348 aa). Positions 450 to 463 are enriched in basic and acidic residues; that stretch reads FEKKDDMASKKELE. Residues 450–471 form a disordered region; the sequence is FEKKDDMASKKELEPVPPVSKS.

It belongs to the methyltransferase superfamily. METL family.

The protein resides in the mitochondrion inner membrane. In terms of biological role, mitochondrial methyltransferase which suppresses respiratory defects caused by OXA1 mutations when overexpressed. The sequence is that of Methyltransferase OMS1, mitochondrial (OMS1) from Saccharomyces cerevisiae (strain ATCC 204508 / S288c) (Baker's yeast).